We begin with the raw amino-acid sequence, 626 residues long: Ankyrin repeat domain-containing protein 55 (626 aa).

ANK repeat units follow at residues 25-54 (VDLAMVYQAASNGDVNSLTSVIREDPSILE), 59-88 (EGCTPLMHAVSGRQVDTVKLLLKMGANINT), 92-124 (YGRTSLCLATYLGWLEGCVSLLRNGAKHNIPDK), 125-156 (NGRLPLHAATAEPDVRLLIVLLQQSSLSEINH), 160-189 (EGMTPLHWAAFHNRPQHTQMLLKKGADPTL), 193-222 (DFKTALHWAVQSGNRILCSIILSHRQGPSI), 229-259 (SGKTCVHIAAASGFGDIINDLAKVPECNLQA), 263-292 (DDRTPLHWAAASGKAECVQSLLDLGMDSNL), and 296-325 (NESTPLAYALYCGHTACVRLLSREGRAEPA). Residues 354–372 (KEEQKAHQKDQSRARPKEE) show a composition bias toward basic and acidic residues. Disordered stretches follow at residues 354–377 (KEEQKAHQKDQSRARPKEEETSEV), 455–491 (HAGLNAGPQHTAQRSQKSRSEQDLLNNRTGCPVSLEN), and 522–626 (QPGH…HDEN). Ser474 carries the post-translational modification Phosphoserine. Residues 604–614 (QRGHDPPRAEE) show a composition bias toward basic and acidic residues. A compositionally biased stretch (polar residues) spans 616–626 (GGSSSPTHDEN).

The protein is Ankyrin repeat domain-containing protein 55 (Ankrd55) of Mus musculus (Mouse).